A 200-amino-acid polypeptide reads, in one-letter code: Recombination protein RecR (200 aa).

The C4-type zinc-finger motif lies at 57–72; sequence CRQCRTLTEQELCPQC. Positions 80–175 constitute a Toprim domain; sequence TQLCVVEGPM…VASRIAHGVP (96 aa).

The protein belongs to the RecR family.

In terms of biological role, may play a role in DNA repair. It seems to be involved in an RecBC-independent recombinational process of DNA repair. It may act with RecF and RecO. This is Recombination protein RecR from Pseudomonas putida (strain W619).